A 485-amino-acid chain; its full sequence is Glutamyl-tRNA(Gln) amidotransferase subunit A (485 aa).

Active-site charge relay system residues include lysine 79 and serine 154. Serine 178 serves as the catalytic Acyl-ester intermediate.

This sequence belongs to the amidase family. GatA subfamily. Heterotrimer of A, B and C subunits.

The enzyme catalyses L-glutamyl-tRNA(Gln) + L-glutamine + ATP + H2O = L-glutaminyl-tRNA(Gln) + L-glutamate + ADP + phosphate + H(+). Allows the formation of correctly charged Gln-tRNA(Gln) through the transamidation of misacylated Glu-tRNA(Gln) in organisms which lack glutaminyl-tRNA synthetase. The reaction takes place in the presence of glutamine and ATP through an activated gamma-phospho-Glu-tRNA(Gln). This Staphylococcus epidermidis (strain ATCC 35984 / DSM 28319 / BCRC 17069 / CCUG 31568 / BM 3577 / RP62A) protein is Glutamyl-tRNA(Gln) amidotransferase subunit A.